Reading from the N-terminus, the 480-residue chain is Flotillin-like protein 2 (480 aa).

The S-palmitoyl cysteine moiety is linked to residue cysteine 37. Residues glutamate 237–alanine 257 adopt a coiled-coil conformation.

It belongs to the band 7/mec-2 family. Flotillin subfamily. May be palmitoylated. Expressed in flowers in green pods. Primarily expressed in vascular tissues. Upon induction of nodulation, expansion of expression in the root cortex in the region of elongating root hairs, which will eventually become colonized by bacteria. Expressed in the infection zone in nodules.

Its subcellular location is the cell membrane. The protein localises to the membrane. It is found in the caveola. Functionally, may act as a scaffolding protein within caveolar membranes, functionally participating in formation of caveolae or caveolae-like vesicles. Required for early symbiotic events and nodules formation. The sequence is that of Flotillin-like protein 2 (FLOT2) from Medicago truncatula (Barrel medic).